The chain runs to 141 residues: Large ribosomal subunit protein uL11 (141 aa).

This sequence belongs to the universal ribosomal protein uL11 family. As to quaternary structure, part of the ribosomal stalk of the 50S ribosomal subunit. Interacts with L10 and the large rRNA to form the base of the stalk. L10 forms an elongated spine to which L12 dimers bind in a sequential fashion forming a multimeric L10(L12)X complex. One or more lysine residues are methylated.

Its function is as follows. Forms part of the ribosomal stalk which helps the ribosome interact with GTP-bound translation factors. The sequence is that of Large ribosomal subunit protein uL11 from Clostridium acetobutylicum (strain ATCC 824 / DSM 792 / JCM 1419 / IAM 19013 / LMG 5710 / NBRC 13948 / NRRL B-527 / VKM B-1787 / 2291 / W).